A 262-amino-acid polypeptide reads, in one-letter code: Shikimate dehydrogenase (NADP(+)) (262 aa).

Shikimate is bound by residues 15 to 17 (SRS) and Thr62. Lys66 acts as the Proton acceptor in catalysis. Residue Glu78 participates in NADP(+) binding. Shikimate contacts are provided by Asn87 and Asp102. NADP(+)-binding positions include 126 to 130 (GAGGA), 150 to 155 (NRTLAR), and Met214. Tyr216 serves as a coordination point for shikimate. Residue Gly236 participates in NADP(+) binding.

This sequence belongs to the shikimate dehydrogenase family. In terms of assembly, homodimer.

It carries out the reaction shikimate + NADP(+) = 3-dehydroshikimate + NADPH + H(+). It functions in the pathway metabolic intermediate biosynthesis; chorismate biosynthesis; chorismate from D-erythrose 4-phosphate and phosphoenolpyruvate: step 4/7. Its function is as follows. Involved in the biosynthesis of the chorismate, which leads to the biosynthesis of aromatic amino acids. Catalyzes the reversible NADPH linked reduction of 3-dehydroshikimate (DHSA) to yield shikimate (SA). The chain is Shikimate dehydrogenase (NADP(+)) from Acinetobacter baumannii (strain AB0057).